Reading from the N-terminus, the 1488-residue chain is Eukaryotic translation initiation factor 4G (1488 aa).

Disordered regions lie at residues 196–320 (VQHR…GQTS), 337–367 (DSEKVDLTSKVSGLTSATSESSISPILGKSE), and 415–707 (THQI…MTEA). Basic and acidic residues-rich tracts occupy residues 216–244 (VSEKESKAPSIPEKHSKESKAPSAVEKHP) and 274–299 (ADEKKESLPMTDSLKDNKKNATRNDT). Composition is skewed to polar residues over residues 300–310 (KNLPQQPQSAS), 345–360 (SKVSGLTSATSESSIS), 448–464 (SLATSKPGNSDATSFVT), and 473–495 (CTTSVPEDHSLMNTSHNKDTQTL). Residues 496–520 (SASVDASDVSEVNSGTSSESTSQST) are compositionally biased toward low complexity. The span at 555–566 (QVKHADGAKDES) shows a compositional bias: basic and acidic residues. Residues 627–646 (QEQSESVATSDGADSSSTVD) show a composition bias toward polar residues. Residues 651–671 (LPEESEREVMCEDDGKKKVEP) are compositionally biased toward basic and acidic residues. Over residues 683–696 (PKLQSSDSGNQASA) the composition is skewed to polar residues. The EIF4E-binding stretch occupies residues 709 to 721 (GRKKYSRDFLLTF). Over residues 753–784 (DREPHPSSARGSDRPTSRGDRRGPAMDDDKWL) the composition is skewed to basic and acidic residues. 3 disordered regions span residues 753 to 795 (DREP…PNRD), 974 to 1000 (RGEREEAEADKTEEEGEIKQTKEEREE), and 1107 to 1299 (WQQR…SEEE). The MIF4G domain occupies 883 to 1106 (QRQLKAILNK…RDSIDLRKNK (224 aa)). Acidic residues predominate over residues 978–989 (EEAEADKTEEEG). 4 stretches are compositionally biased toward basic and acidic residues: residues 990–1000 (EIKQTKEEREE), 1111–1132 (RKVDGPKKIDEVHRDAAQERHA), 1181–1191 (IRYEQERHQFD), and 1254–1267 (TREDTSSRIPDRFS). The span at 1273–1294 (AAQSASSSHRPASQEGRSGNKS) shows a compositional bias: polar residues. The region spanning 1299–1423 (ELREKSIATI…VLQDVGKLIE (125 aa)) is the MI domain.

It belongs to the eukaryotic initiation factor 4G family. EIF4F is a multi-subunit complex, the composition of which varies with external and internal environmental conditions. It is composed of at least EIF4A, EIF4E and EIF4G. In higher plants two isoforms of EIF4F have been identified, named isoform EIF4F and isoform EIF(iso)4F. Isoform EIF4F has subunits p220 and p26, whereas isoform EIF(iso)4F has subunits p82 and p28.

Component of the protein complex eIF4F, which is involved in the recognition of the mRNA cap, ATP-dependent unwinding of 5'-terminal secondary structure and recruitment of mRNA to the ribosome. The sequence is that of Eukaryotic translation initiation factor 4G from Triticum aestivum (Wheat).